The following is a 467-amino-acid chain: MADRISTGELGRRPGQGRVNLLLVGDATRYFLAGSMQKFFPSTAQITLTISNVKKVAVLLAANSFDIIFLKVTSTLTAEEQEAAKLIRSGKKKNTHLLFAFVIPERLKGYVSEYGADISFSEPLTLEKVNTVIHYWKTYFTNTDMENTELPPECRLYFQTSRSELGGRFSTDMFLCSELLKNDARLGLKAPLSSLDKSKQASFLHSTKEKLRRERIKSCCEQLRTLLPYVKGRKSDVASVIEATVDYVKQVRESLSPAIMAQVTEAIQNNRRFSKRQMPIELFLPFSATSQREDAMLTSAFSPVQEIQLLADRGLNVYSMTAAGGALEGAVRGQPGSVSESSIEDLYKTRVPSTARSLNSFHSVKYTSGTVSPHEAAARTNQNISTYLPPTAPSVSNFIPQHCNAMLCPARPTSPNCLCTPGHELAASSRAASASIFRGFRAASASDHQASQPPALPSPQPHDSSYF.

The 52-residue stretch at 200 to 251 folds into the bHLH domain; sequence QASFLHSTKEKLRRERIKSCCEQLRTLLPYVKGRKSDVASVIEATVDYVKQV. The span at 443 to 453 shows a compositional bias: low complexity; sequence ASASDHQASQP. The tract at residues 443-467 is disordered; it reads ASASDHQASQPPALPSPQPHDSSYF.

In terms of assembly, forms both hetero- and homodimers with SOHLH1. As to expression, preferentially expressed in the adult ovary and testis. Expressed in the majority of spermatogonia in adult animals, but not in the most undifferentiated spermatogonial population.

The protein localises to the nucleus. It localises to the cytoplasm. Transcription regulator of both male and female germline differentiation. Suppresses genes involved in spermatogonial stem cells maintenance, and induces genes important for spermatogonial differentiation. Coordinates oocyte differentiation without affecting meiosis I. This chain is Spermatogenesis- and oogenesis-specific basic helix-loop-helix-containing protein 2 (Sohlh2), found in Mus musculus (Mouse).